Here is a 1121-residue protein sequence, read N- to C-terminus: Myelin transcription factor 1 (1121 aa).

2 disordered regions span residues 1-156 (MSLE…SKGS) and 200-376 (EAAE…MTRG). A CCHHC-type 1 zinc finger spans residues 21 to 64 (PETTAADLSCPTPGCTGSGHVRGKYSRHRSLQSCPLAKKRKLEG). Residues C30, C35, H48, and C54 each contribute to the Zn(2+) site. The segment covering 41–50 (VRGKYSRHRS) has biased composition (basic residues). Basic and acidic residues-rich tracts occupy residues 62–71 (LEGAEAEHLV) and 123–132 (DEIHRPETAE). Residues 147–156 (GSATASSKGS) show a composition bias toward low complexity. A compositionally biased stretch (acidic residues) spans 258-308 (EEEDEEEEEEEEEEEEDEEEEEEEEEEEEEEEEEEEEEEEEEEEEEEEEAA). A compositionally biased stretch (basic and acidic residues) spans 346 to 358 (VRSDDDKDEDTHS). 2 CCHHC-type zinc fingers span residues 433–476 (SRAE…PPEI) and 477–520 (LAMH…KLAK). Residues C442, C447, H460, C466, C486, C491, H504, and C510 each contribute to the Zn(2+) site. Disordered regions lie at residues 517–540 (KLAK…SNSD) and 668–774 (TLDL…EERK). Polar residues predominate over residues 526–540 (QPQTGDPSKSSSNSD). A compositionally biased stretch (low complexity) spans 705–723 (SSTSAPSSSMTSPQSSQAS). Over residues 724 to 733 (RQDEWDRPLD) the composition is skewed to basic and acidic residues. The span at 759–770 (EADDQEVSEENF) shows a compositional bias: acidic residues. 4 consecutive CCHHC-type zinc fingers follow at residues 791–834 (KDIK…LRNL), 835–878 (MAAH…GVKV), 884–927 (DKED…QKEG), and 937–980 (KSLK…GKKG). Zn(2+) is bound by residues C800, C805, H818, C824, C844, C849, H862, C868, C893, C898, H911, C917, C946, C951, H964, and C970.

This sequence belongs to the MYT1 family. In terms of assembly, interacts with STEAP3. As to expression, mostly in developing nervous system. Expressed in neural progenitors and oligodendrocyte lineage cells. More highly expressed in oligodendrocyte progenitors than in differentiated oligodendrocytes.

Its subcellular location is the nucleus. Functionally, binds to the promoter region of genes encoding proteolipid proteins of the central nervous system. May play a role in the development of neurons and oligodendroglia in the CNS. May regulate a critical transition point in oligodendrocyte lineage development by modulating oligodendrocyte progenitor proliferation relative to terminal differentiation and up-regulation of myelin gene transcription. The polypeptide is Myelin transcription factor 1 (MYT1) (Homo sapiens (Human)).